Here is a 135-residue protein sequence, read N- to C-terminus: Retinol-binding protein 5 (135 aa).

Belongs to the calycin superfamily. Fatty-acid binding protein (FABP) family.

The protein resides in the cytoplasm. Functionally, intracellular transport of retinol. The sequence is that of Retinol-binding protein 5 (RBP5) from Pongo abelii (Sumatran orangutan).